The primary structure comprises 394 residues: ATP phosphoribosyltransferase regulatory subunit (394 aa).

This sequence belongs to the class-II aminoacyl-tRNA synthetase family. HisZ subfamily. As to quaternary structure, heteromultimer composed of HisG and HisZ subunits.

The protein localises to the cytoplasm. It functions in the pathway amino-acid biosynthesis; L-histidine biosynthesis; L-histidine from 5-phospho-alpha-D-ribose 1-diphosphate: step 1/9. Functionally, required for the first step of histidine biosynthesis. May allow the feedback regulation of ATP phosphoribosyltransferase activity by histidine. This chain is ATP phosphoribosyltransferase regulatory subunit, found in Geobacillus thermodenitrificans (strain NG80-2).